The sequence spans 789 residues: Glycerol-3-phosphate acyltransferase (789 aa).

The HXXXXD motif signature appears at 275 to 280 (SHRSYI).

It belongs to the GPAT/DAPAT family.

It is found in the cell membrane. The catalysed reaction is sn-glycerol 3-phosphate + an acyl-CoA = a 1-acyl-sn-glycero-3-phosphate + CoA. Its pathway is phospholipid metabolism; CDP-diacylglycerol biosynthesis; CDP-diacylglycerol from sn-glycerol 3-phosphate: step 1/3. This is Glycerol-3-phosphate acyltransferase from Mycobacterium tuberculosis (strain ATCC 25177 / H37Ra).